The following is a 999-amino-acid chain: Disks large-associated protein 1 (999 aa).

Disordered regions lie at residues 155 to 213 (HSLE…GYWS), 395 to 418 (MAED…ARRA), and 918 to 989 (NWRP…DSIE). Residues 194–204 (RERCKSAEPKN) are compositionally biased toward basic and acidic residues. 2 stretches are compositionally biased toward basic and acidic residues: residues 923-932 (DPPERKERRL) and 947-965 (LARD…EARK). Positions 976-985 (VRQNSATESA) are enriched in polar residues. Positions 997-999 (TRL) match the PDZ-binding motif.

The protein belongs to the SAPAP family.

It is found in the cell membrane. Its subcellular location is the postsynaptic density. It localises to the synapse. In terms of biological role, part of the postsynaptic scaffold in neuronal cells. This is Disks large-associated protein 1 from Danio rerio (Zebrafish).